A 551-amino-acid chain; its full sequence is Membrane protein insertase YidC (551 aa).

A helical membrane pass occupies residues Tyr-6–Asp-26. Positions Ser-34–Ser-50 are enriched in low complexity. The tract at residues Ser-34–Pro-68 is disordered. Residues Ala-56 to Pro-68 are compositionally biased toward polar residues. A run of 5 helical transmembrane segments spans residues Thr-340–Ile-360, Phe-363–Phe-383, Leu-433–Leu-453, Phe-464–Met-484, and Ile-509–Trp-529.

It belongs to the OXA1/ALB3/YidC family. Type 1 subfamily. In terms of assembly, interacts with the Sec translocase complex via SecD. Specifically interacts with transmembrane segments of nascent integral membrane proteins during membrane integration.

It is found in the cell inner membrane. Required for the insertion and/or proper folding and/or complex formation of integral membrane proteins into the membrane. Involved in integration of membrane proteins that insert both dependently and independently of the Sec translocase complex, as well as at least some lipoproteins. Aids folding of multispanning membrane proteins. The sequence is that of Membrane protein insertase YidC from Marinomonas sp. (strain MWYL1).